The chain runs to 604 residues: Solute carrier family 23 member 1 (604 aa).

The tract at residues 1–29 is disordered; that stretch reads MKAQEDPGSSKQHECPDSAGTSTRDQQAP. Topologically, residues 1–59 are cytoplasmic; the sequence is MKAQEDPGSSKQHECPDSAGTSTRDQQAPLPAEPKFDMLYKIEDVPPWYLCILLGFQHY. A helical membrane pass occupies residues 60–80; it reads LTCFSGTIAVPFLLAEALCVG. Residues 81–88 lie on the Extracellular side of the membrane; that stretch reads RDQHMISQ. A helical transmembrane segment spans residues 89–109; the sequence is LIGTIFTCVGITTLIQTTVGI. Position 110 (arginine 110) is a topological domain, cytoplasmic. A helical membrane pass occupies residues 111 to 131; sequence LPLFQASAFAFLVPAKAILAL. The Extracellular portion of the chain corresponds to 132 to 166; the sequence is ERWKCPPEEEIYGNWSMPLNTSHIWHPRIREVQGA. N-linked (GlcNAc...) asparagine glycosylation is found at asparagine 145 and asparagine 151. A helical transmembrane segment spans residues 167-187; that stretch reads IMVSSVVEVVIGLLGLPGALL. Residues 188–214 lie on the Cytoplasmic side of the membrane; sequence SYIGPLTVTPTVSLIGLSVFQAAGDRA. A helical transmembrane segment spans residues 215–232; sequence GSHWGISACSILLIVLFS. At 233 to 236 the chain is on the extracellular side; it reads QYLR. The helical intramembrane region spans 237 to 250; the sequence is NLTFLLPVYRWGKG. Over 251-257 the chain is Extracellular; the sequence is LTLFRIQ. The helical transmembrane segment at 258–278 threads the bilayer; that stretch reads IFKMFPIVLAIMTVWLLCYVL. The Cytoplasmic segment spans residues 279–319; the sequence is TLTDVLPADPTVYGFQARTDARGDIMAISPWIRIPYPCQWG. The helical transmembrane segment at 320-340 threads the bilayer; it reads LPTVTVAAVLGMFSATLAGII. The Extracellular portion of the chain corresponds to 341-365; sequence ESIGDYYACARLAGAPPPPVHAINR. The helical transmembrane segment at 366-386 threads the bilayer; it reads GIFTEGVCCIIAGLLGTGNGS. The Cytoplasmic portion of the chain corresponds to 387-409; it reads TSSSPNIGVLGITKVGSRRVVQY. Residues 410–430 form a helical membrane-spanning segment; the sequence is GAGIMLILGAIGKFTALFASL. Over 431–433 the chain is Extracellular; the sequence is PDP. The chain crosses the membrane as a helical span at residues 434 to 454; that stretch reads ILGGMFCTLFGMITAVGLSNL. The Cytoplasmic segment spans residues 455–464; it reads QFVDMNSSRN. Residues 465 to 485 form a helical membrane-spanning segment; it reads LFVLGFSMFFGLTLPNYLDSN. The Extracellular segment spans residues 486 to 497; the sequence is PGAINTGVPEVD. Residues 498 to 518 form a helical membrane-spanning segment; that stretch reads QILTVLLTTEMFVGGCLAFIL. Residues 519–604 lie on the Cytoplasmic side of the membrane; the sequence is DNTVPGSPEE…TETGSVCTKV (86 aa). Threonine 597 is modified (phosphothreonine). Serine 599 is modified (phosphoserine). Position 602 is a phosphothreonine (threonine 602).

This sequence belongs to the nucleobase:cation symporter-2 (NCS2) (TC 2.A.40) family. Phosphorylated. Highly expressed in the straight segment of proximal tubules in the kidney, in intestine and liver. Detected in epithelial cells of the bronchiole and epididymis.

It localises to the cell membrane. It catalyses the reaction L-ascorbate(out) + 2 Na(+)(out) = L-ascorbate(in) + 2 Na(+)(in). The enzyme catalyses urate(out) + 2 Na(+)(out) = urate(in) + 2 Na(+)(in). Its function is as follows. Sodium/ascorbate cotransporter. Mediates electrogenic uptake of vitamin C, with a stoichiometry of 2 Na(+) for each ascorbate. Has retained some ancestral activity toward nucleobases such as urate, an oxidized purine. Low-affinity high-capacity sodium:urate cotransporter, may regulate serum urate levels by serving as a renal urate re-absorber. This chain is Solute carrier family 23 member 1 (Slc23a1), found in Rattus norvegicus (Rat).